The following is a 489-amino-acid chain: Fumarate reductase (CoM/CoB) subunit B (489 aa).

The 2Fe-2S ferredoxin-type domain occupies 2-89 (INVKVLRFEP…GAVIEPVDLP (88 aa)). Residues Cys53, Cys58, Cys61, and Cys73 each coordinate [2Fe-2S] cluster. 2 4Fe-4S ferredoxin-type domains span residues 124 to 158 (PEDYQDTKKLRGCIECFSCISSCPVIKESTEYAGP) and 178 to 209 (AAGGVEEGLYCCTTCGKCAEVCPKELNVPGDA). Residues Cys136, Cys139, Cys142, Cys146, Cys189, Cys192, Cys195, and Cys199 each contribute to the [4Fe-4S] cluster site.

As to quaternary structure, subunit B of the heterodimeric fumarate reductase of methanogenic Archaea, composed of subunits A (TfrA) and B (TfrB). [2Fe-2S] cluster is required as a cofactor. Requires [4Fe-4S] cluster as cofactor.

The protein resides in the cytoplasm. It carries out the reaction coenzyme B + coenzyme M + fumarate = coenzyme M-coenzyme B heterodisulfide + succinate. Catalyzes the reduction of fumarate with reduced coenzyme M (CoM-S-H) and coenzyme B (CoB-S-H). In vitro, is able to reduces fumarate with reduced benzyl viologen, oxidize CoM-S-H and CoB-S-H to CoM-S-S-CoB with methylene blue, and reduce CoM-S-S-CoB with reduced benzyl viologen. The enzyme has specificity for the two thiol compounds as the CoB--CoM heterodisulfide reductase. The enzyme is very sensitive to oxygen. The polypeptide is Fumarate reductase (CoM/CoB) subunit B (Methanothermobacter marburgensis (strain ATCC BAA-927 / DSM 2133 / JCM 14651 / NBRC 100331 / OCM 82 / Marburg) (Methanobacterium thermoautotrophicum)).